A 253-amino-acid polypeptide reads, in one-letter code: AA9 family lytic polysaccharide monooxygenase F (253 aa).

Residues 1-16 (MKVLATLLASVGLVAA) form the signal peptide. Residue His-17 participates in Cu(2+) binding. N-linked (GlcNAc...) asparagine glycosylation is present at Asn-22. 2 disulfides stabilise this stretch: Cys-75–Cys-193 and Cys-163–Cys-253. His-105 provides a ligand contact to Cu(2+). A glycan (N-linked (GlcNAc...) asparagine) is linked at Asn-143. O2-binding residues include His-179 and Gln-188. Tyr-190 is a binding site for Cu(2+).

The protein belongs to the polysaccharide monooxygenase AA9 family. Requires Cu(2+) as cofactor.

It localises to the secreted. The catalysed reaction is [(1-&gt;4)-beta-D-glucosyl]n+m + reduced acceptor + O2 = 4-dehydro-beta-D-glucosyl-[(1-&gt;4)-beta-D-glucosyl]n-1 + [(1-&gt;4)-beta-D-glucosyl]m + acceptor + H2O.. Functionally, lytic polysaccharide monooxygenase (LPMO) that depolymerizes crystalline and amorphous polysaccharides via the oxidation of scissile alpha- or beta-(1-4)-glycosidic bonds, yielding C1 or C4 oxidation products. Catalysis by LPMOs requires the reduction of the active-site copper from Cu(II) to Cu(I) by a reducing agent and H(2)O(2) or O(2) as a cosubstrate. The chain is AA9 family lytic polysaccharide monooxygenase F from Podospora anserina (strain S / ATCC MYA-4624 / DSM 980 / FGSC 10383) (Pleurage anserina).